Reading from the N-terminus, the 640-residue chain is MHISELTHPNELKGLSIRELEEVSRQIREKHLQTVATSGGHLGPGLGVVELTVALYSTLDLDKDRVIWDVGHQAYPHKMLTGRYHDFHTLRQKDGVAGYLKRSESRFDHFGAGHASTSISAGLGMALARDAKGEDFKVVSIIGDGALTGGMALEAINHAGHLPHTRLMVILNDNEMSISPNVGAISRYLNKVRLSSPMQFLTDNLEEQIKHLPFVGDSLTPEMERVKEGMKRLVVPKVGAVIEELGFKYFGPIDGHSLQELIDTFKQAEKVPGPVFVHVSTTKGKGYDLAEKDQVGYHAQSPFNLSTGKAYPSSKPKPPSYSKVFAHTLTTLAKENPNIVGITAAMATGTGLDKLQAKLPKQYVDVGIAEQHAVTLAAGMACEGIRPVVAIYSTFLQRGYDQIIHDVCIQKLPVFFCLDRAGIVGADGPTHQGMYDIAYLRCIPNLVLMAPKDEAELQQMLVTGVNYTGGAIAMRYPRGNGIGVPLMEEGWEPLEIGKAEILRSGDDVLLLGYGSMVYPALQTAELLHEHGIEATVVNARFVKPLDTELILPLAERIGKVVTMEEGCLMGGFGSAVAEALMDNNVLVPLKRLGVPDILVDHATPEQSTVDLGLTPAQMAQNIMASLFKTETESVVAPGVS.

Residues His-72 and 113-115 contribute to the thiamine diphosphate site; that span reads GHA. Residue Asp-144 coordinates Mg(2+). Residues 145-146, Asn-174, Tyr-287, and Glu-370 each bind thiamine diphosphate; that span reads GA. Asn-174 serves as a coordination point for Mg(2+).

The protein belongs to the transketolase family. DXPS subfamily. As to quaternary structure, homodimer. Mg(2+) serves as cofactor. The cofactor is thiamine diphosphate.

The enzyme catalyses D-glyceraldehyde 3-phosphate + pyruvate + H(+) = 1-deoxy-D-xylulose 5-phosphate + CO2. It functions in the pathway metabolic intermediate biosynthesis; 1-deoxy-D-xylulose 5-phosphate biosynthesis; 1-deoxy-D-xylulose 5-phosphate from D-glyceraldehyde 3-phosphate and pyruvate: step 1/1. Its function is as follows. Catalyzes the acyloin condensation reaction between C atoms 2 and 3 of pyruvate and glyceraldehyde 3-phosphate to yield 1-deoxy-D-xylulose-5-phosphate (DXP). In Synechocystis sp. (strain ATCC 27184 / PCC 6803 / Kazusa), this protein is 1-deoxy-D-xylulose-5-phosphate synthase.